A 214-amino-acid polypeptide reads, in one-letter code: Probable DNA (cytosine-5)-methyltransferase (214 aa).

The active site involves cysteine 62.

Belongs to the class I-like SAM-binding methyltransferase superfamily. C5-methyltransferase family. In terms of assembly, probably requires another subunit for function.

The enzyme catalyses a 2'-deoxycytidine in DNA + S-adenosyl-L-methionine = a 5-methyl-2'-deoxycytidine in DNA + S-adenosyl-L-homocysteine + H(+). This is probably the methylase that recognizes and modifies 5'-CpG-3'. The sequence is that of Probable DNA (cytosine-5)-methyltransferase from Dryophytes versicolor (chameleon treefrog).